Here is a 290-residue protein sequence, read N- to C-terminus: MQGKIIKSLAGFYYVESEGQVYQTRARGNFRKRGETPYVGDIVDFSAEDNSEGYILAIHPRKNSLVRPPIVNIDQAVVIMSAKEPEFNSNLLDRFLILLEHKAIHPVVYISKMDLLDSPEEIKAIGRQYQAIGYNFVTSLEELLPLLADKITVFMGQTGVGKSTLLNRIAPELALETGEISDSLGRGRHTTRAVSFYNTHGGKIADTPGFSSLDYDIANAEDLNEAFPELRRLSHKCKFRSCTHTHEPKCAVKAALETGELWPVRYEHYLQFLSEIENRRETYKKVIKRK.

The 152-residue stretch at 62–213 (KNSLVRPPIV…IADTPGFSSL (152 aa)) folds into the CP-type G domain. GTP-binding positions include 111–114 (SKMD) and 156–164 (GQTGVGKST). 4 residues coordinate Zn(2+): Cys237, Cys242, His244, and Cys250.

Belongs to the TRAFAC class YlqF/YawG GTPase family. RsgA subfamily. In terms of assembly, monomer. Associates with 30S ribosomal subunit, binds 16S rRNA. It depends on Zn(2+) as a cofactor.

The protein localises to the cytoplasm. In terms of biological role, one of several proteins that assist in the late maturation steps of the functional core of the 30S ribosomal subunit. Helps release RbfA from mature subunits. May play a role in the assembly of ribosomal proteins into the subunit. Circularly permuted GTPase that catalyzes slow GTP hydrolysis, GTPase activity is stimulated by the 30S ribosomal subunit. The protein is Small ribosomal subunit biogenesis GTPase RsgA of Streptococcus pyogenes serotype M6 (strain ATCC BAA-946 / MGAS10394).